A 318-amino-acid polypeptide reads, in one-letter code: MEWENHTILVEFFLKGLSGHPRLELLFFVLIFIMYVVILLGNGTLILISILDPHLHTPMYFFLGNLSFLDICYTTTSIPSTLVSFLSERKTISLSGCAVQMFLGLAMGTTECVLLGMMAFDRYVAICNPLRYPIIMSKDAYVPMAAGSWIIGAVNSAVQSVFVVQLPFCRNNIINHFTCEILAVMKLACADISDNEFIMLVATTLFILTPLLLIIVSYTLIIVSIFKISSSEGRSKASSTCSAHLTVVIIFYGTILFMYMKPKSKETLNSDDLDATDKIISMFYGVMTPMMNPLIYSLRNKDVKEAVKHLLNRRFFSK.

Topologically, residues Met-1–Leu-25 are extracellular. Asn-5 carries N-linked (GlcNAc...) asparagine glycosylation. Residues Leu-26–Ile-46 form a helical membrane-spanning segment. Residues Leu-47–His-54 lie on the Cytoplasmic side of the membrane. Residues Leu-55–Thr-75 form a helical membrane-spanning segment. Residues Thr-76–Val-99 lie on the Extracellular side of the membrane. An intrachain disulfide couples Cys-97 to Cys-189. The helical transmembrane segment at Gln-100–Phe-120 threads the bilayer. Topologically, residues Asp-121–Asp-139 are cytoplasmic. Residues Ala-140–Ser-160 form a helical membrane-spanning segment. The Extracellular segment spans residues Val-161–Phe-197. A helical transmembrane segment spans residues Ile-198–Ser-217. Residues Tyr-218–Ala-237 are Cytoplasmic-facing. The chain crosses the membrane as a helical span at residues Ser-238–Met-258. Residues Tyr-259–Asp-277 are Extracellular-facing. Residues Lys-278 to Leu-298 form a helical membrane-spanning segment. Residues Arg-299–Lys-318 lie on the Cytoplasmic side of the membrane.

Belongs to the G-protein coupled receptor 1 family.

The protein resides in the cell membrane. Functionally, odorant receptor. This chain is Olfactory receptor 13C2 (OR13C2), found in Homo sapiens (Human).